Here is a 168-residue protein sequence, read N- to C-terminus: Photosystem I assembly protein Ycf3 (168 aa).

TPR repeat units follow at residues 35–68 (AFTYYRDGMSAQSEGNYAEALQNYYEAMRLEIDP), 72–105 (SYILYNIGLIHTSNGEHTKALEYYFRALERNPFL), and 120–153 (GEQAIRQGDSEIAEAWSDQAAEYWKQAIALTPGN).

It belongs to the Ycf3 family.

It localises to the plastid. The protein localises to the chloroplast thylakoid membrane. Functionally, essential for the assembly of the photosystem I (PSI) complex. May act as a chaperone-like factor to guide the assembly of the PSI subunits. The sequence is that of Photosystem I assembly protein Ycf3 from Drimys granadensis.